We begin with the raw amino-acid sequence, 624 residues long: Phosphomethylpyrimidine synthase (624 aa).

Substrate contacts are provided by residues N231, M260, Y289, H325, 345-347, 386-389, and E425; these read SRG and DGLR. Zn(2+) is bound at residue H429. Y452 contributes to the substrate binding site. H493 contributes to the Zn(2+) binding site. Residues C573, C576, and C581 each coordinate [4Fe-4S] cluster.

This sequence belongs to the ThiC family. In terms of assembly, homodimer. It depends on [4Fe-4S] cluster as a cofactor.

The catalysed reaction is 5-amino-1-(5-phospho-beta-D-ribosyl)imidazole + S-adenosyl-L-methionine = 4-amino-2-methyl-5-(phosphooxymethyl)pyrimidine + CO + 5'-deoxyadenosine + formate + L-methionine + 3 H(+). Its pathway is cofactor biosynthesis; thiamine diphosphate biosynthesis. Catalyzes the synthesis of the hydroxymethylpyrimidine phosphate (HMP-P) moiety of thiamine from aminoimidazole ribotide (AIR) in a radical S-adenosyl-L-methionine (SAM)-dependent reaction. This is Phosphomethylpyrimidine synthase from Myxococcus xanthus (strain DK1622).